The following is a 490-amino-acid chain: Fumitremorgin C monooxygenase (490 aa).

Residues 12–32 (LGVVGASLIVILGIILLFPLG) form a helical membrane-spanning segment. Position 442 (Cys442) interacts with heme.

This sequence belongs to the cytochrome P450 family. The cofactor is heme.

It is found in the membrane. The catalysed reaction is fumitremorgin C + 2 reduced [NADPH--hemoprotein reductase] + 2 O2 = 12alpha,13alpha-dihydroxyfumitremorgin C + 2 oxidized [NADPH--hemoprotein reductase] + 2 H2O + 2 H(+). It participates in mycotoxin biosynthesis. Its function is as follows. Cytochrome P450 monooxygenase; part of the gene cluster that mediates the biosynthesis of fumitremorgins, indole alkaloids that carry not only intriguing chemical structures, but also interesting biological and pharmacological activities. The biosynthesis of fumitremorgin-type alkaloids begins by condensation of the two amino acids L-tryptophan and L-proline to brevianamide F, catalyzed by the non-ribosomal peptide synthetase ftmA. Brevianamide F is then prenylated by the prenyltransferase ftmPT1/ftmB in the presence of dimethylallyl diphosphate, resulting in the formation of tryprostatin B. The three cytochrome P450 monooxygenases, ftmP450-1/ftmC, ftmP450-2/ftmE and ftmP450-3/FtmG, are responsible for the conversion of tryprostatin B to 6-hydroxytryprostatin B, tryprostatin A to fumitremorgin C and fumitremorgin C to 12,13-dihydroxyfumitremorgin C, respectively. The putative methyltransferase ftmMT/ftmD is expected for the conversion of 6-hydroxytryprostatin B to tryprostatin A. FtmPT2/FtmH catalyzes the prenylation of 12,13-dihydroxyfumitre-morgin C in the presence of dimethylallyl diphosphate, resulting in the formation of fumitremorgin B. Fumitremorgin B is further converted to verruculogen by ftmOx1/ftmF via the insertion of an endoperoxide bond between the two prenyl moieties. In some fungal species, verruculogen is further converted to fumitremorgin A, but the enzymes involved in this step have not been identified yet. The polypeptide is Fumitremorgin C monooxygenase (Aspergillus fumigatus (strain ATCC MYA-4609 / CBS 101355 / FGSC A1100 / Af293) (Neosartorya fumigata)).